The primary structure comprises 273 residues: Aquaporin NIP1-4 (273 aa).

The next 2 membrane-spanning stretches (helical) occupy residues 59–79 (LLAE…AITV) and 86–106 (VTFP…VYAV). An NPA 1 motif is present at residues 115–117 (NPA). 3 helical membrane passes run 133-155 (APAY…RLMF), 174-194 (SLVI…AVAT), and 198-218 (AVGH…VLFA). Residues 227–229 (NPA) carry the NPA 2 motif. Residues 245 to 265 (WVYILGPFAGAAAGAWAYSLI) form a helical membrane-spanning segment.

It belongs to the MIP/aquaporin (TC 1.A.8) family. NIP (TC 1.A.8.12) subfamily. Expressed in leaves.

The protein resides in the membrane. Aquaporins facilitate the transport of water and small neutral solutes across cell membranes. This is Aquaporin NIP1-4 (NIP1-4) from Oryza sativa subsp. japonica (Rice).